The following is a 602-amino-acid chain: Elongation factor 4 (602 aa).

The tr-type G domain maps to 7–189 (RNIRNFSIIA…AIVQRIPAPQ (183 aa)). GTP contacts are provided by residues 19 to 24 (DHGKST) and 136 to 139 (NKID).

Belongs to the TRAFAC class translation factor GTPase superfamily. Classic translation factor GTPase family. LepA subfamily.

Its subcellular location is the cell inner membrane. It catalyses the reaction GTP + H2O = GDP + phosphate + H(+). Functionally, required for accurate and efficient protein synthesis under certain stress conditions. May act as a fidelity factor of the translation reaction, by catalyzing a one-codon backward translocation of tRNAs on improperly translocated ribosomes. Back-translocation proceeds from a post-translocation (POST) complex to a pre-translocation (PRE) complex, thus giving elongation factor G a second chance to translocate the tRNAs correctly. Binds to ribosomes in a GTP-dependent manner. The sequence is that of Elongation factor 4 from Xylella fastidiosa (strain M12).